The primary structure comprises 536 residues: Formate--tetrahydrofolate ligase (536 aa).

51-58 (TPAGEGKT) serves as a coordination point for ATP.

This sequence belongs to the formate--tetrahydrofolate ligase family.

The enzyme catalyses (6S)-5,6,7,8-tetrahydrofolate + formate + ATP = (6R)-10-formyltetrahydrofolate + ADP + phosphate. The protein operates within one-carbon metabolism; tetrahydrofolate interconversion. This is Formate--tetrahydrofolate ligase from Thermoplasma acidophilum (strain ATCC 25905 / DSM 1728 / JCM 9062 / NBRC 15155 / AMRC-C165).